Consider the following 180-residue polypeptide: UPF0227 protein YE1706 (180 aa).

The protein belongs to the UPF0227 family.

This chain is UPF0227 protein YE1706, found in Yersinia enterocolitica serotype O:8 / biotype 1B (strain NCTC 13174 / 8081).